The sequence spans 153 residues: NADH dehydrogenase [ubiquinone] 1 beta subcomplex subunit 11, mitochondrial (153 aa).

A mitochondrion-targeting transit peptide spans 1–29; it reads MAAGLFGLSARRLLAAAATRGLPAARVRW. Residues 49–72 are disordered; the sequence is PEPTTQWQEDLDPEDENLYEKNPD. A helical transmembrane segment spans residues 89–109; sequence LVFFFGVSIILVLGSTFVAYL.

The protein belongs to the complex I NDUFB11 subunit family. In terms of assembly, complex I is composed of 45 different subunits. Interacts with BCAP31.

It is found in the mitochondrion inner membrane. Functionally, accessory subunit of the mitochondrial membrane respiratory chain NADH dehydrogenase (Complex I), that is believed not to be involved in catalysis. Complex I functions in the transfer of electrons from NADH to the respiratory chain. The immediate electron acceptor for the enzyme is believed to be ubiquinone. This is NADH dehydrogenase [ubiquinone] 1 beta subcomplex subunit 11, mitochondrial (NDUFB11) from Pongo pygmaeus (Bornean orangutan).